The sequence spans 214 residues: Large ribosomal subunit protein uL3 (214 aa).

The span at 130–151 shows a compositional bias: polar residues; that stretch reads FSSNRASHGNSRSHNTPGSIGQ. The interval 130 to 163 is disordered; it reads FSSNRASHGNSRSHNTPGSIGQAQDPGRVFPGKR. An N5-methylglutamine modification is found at Gln153.

The protein belongs to the universal ribosomal protein uL3 family. In terms of assembly, part of the 50S ribosomal subunit. Forms a cluster with proteins L14 and L19. In terms of processing, methylated by PrmB.

Functionally, one of the primary rRNA binding proteins, it binds directly near the 3'-end of the 23S rRNA, where it nucleates assembly of the 50S subunit. This is Large ribosomal subunit protein uL3 from Chromobacterium violaceum (strain ATCC 12472 / DSM 30191 / JCM 1249 / CCUG 213 / NBRC 12614 / NCIMB 9131 / NCTC 9757 / MK).